The primary structure comprises 445 residues: Probable D-serine dehydratase (445 aa).

Lys116 is subject to N6-(pyridoxal phosphate)lysine.

It belongs to the serine/threonine dehydratase family. DsdA subfamily. Requires pyridoxal 5'-phosphate as cofactor.

The enzyme catalyses D-serine = pyruvate + NH4(+). In Bacillus mycoides (strain KBAB4) (Bacillus weihenstephanensis), this protein is Probable D-serine dehydratase.